We begin with the raw amino-acid sequence, 340 residues long: DnaJ homolog subfamily B member 1 (340 aa).

Residues 2-70 enclose the J domain; the sequence is GKDYYQTLGL…REIFDRYGEE (69 aa). Residues 68–90 are disordered; the sequence is GEEGLKGSGPSGGSSGGTNGTSF. Residues 73–86 are compositionally biased toward gly residues; sequence KGSGPSGGSSGGTN. Position 307 is a phosphothreonine (T307).

Interacts with DNAJC3. Interacts with HSF1 (via transactivation domain); this interaction results in the inhibition of heat shock- and HSF1-induced transcriptional activity during the attenuation and recovery phase period of the heat shock response. Interacts with BAG3.

It localises to the cytoplasm. It is found in the nucleus. Its subcellular location is the nucleolus. Functionally, interacts with HSP70 and can stimulate its ATPase activity. Stimulates the association between HSC70 and HIP. Negatively regulates heat shock-induced HSF1 transcriptional activity during the attenuation and recovery phase period of the heat shock response. Stimulates ATP hydrolysis and the folding of unfolded proteins mediated by HSPA1A/B (in vitro). This chain is DnaJ homolog subfamily B member 1 (DNAJB1), found in Bos taurus (Bovine).